Consider the following 312-residue polypeptide: Ribonuclease Z (312 aa).

Zn(2+)-binding residues include His63, His65, Asp67, His68, His141, Asp212, and His270. Asp67 (proton acceptor) is an active-site residue.

Belongs to the RNase Z family. In terms of assembly, homodimer. The cofactor is Zn(2+).

It carries out the reaction Endonucleolytic cleavage of RNA, removing extra 3' nucleotides from tRNA precursor, generating 3' termini of tRNAs. A 3'-hydroxy group is left at the tRNA terminus and a 5'-phosphoryl group is left at the trailer molecule.. Its function is as follows. Zinc phosphodiesterase, which displays some tRNA 3'-processing endonuclease activity. Probably involved in tRNA maturation, by removing a 3'-trailer from precursor tRNA. This Lactobacillus acidophilus (strain ATCC 700396 / NCK56 / N2 / NCFM) protein is Ribonuclease Z.